A 162-amino-acid polypeptide reads, in one-letter code: Anaerobic nitrite reductase NSHB2 (162 aa).

Residues 16-159 enclose the Globin domain; sequence SFSEEQEALV…LVAAIKQEMK (144 aa). A Homodimerization motif is present at residues 49-53; sequence EVAPS. Heme b is bound by residues Ser59, Lys73, His77, Arg100, Thr104, and His105. A Homodimerization motif is present at residues 112–124; it reads DAHFEVTRFALLE.

The protein belongs to the plant globin family. In terms of assembly, homodimer. Heme b serves as cofactor. In terms of tissue distribution, mainly expressed in germinating seeds, seedlings, roots, flowers and leaves.

Its subcellular location is the cytoplasm. It localises to the nucleus. The catalysed reaction is Fe(III)-heme b-[protein] + nitric oxide + H2O = Fe(II)-heme b-[protein] + nitrite + 2 H(+). Phytoglobin that reduces nitrite to nitric oxide under anoxic conditions (e.g. during flooding or in waterlogged soil). May not function as an oxygen storage or transport protein. Has an unusually high affinity for O(2) through an hexacoordinate heme iron because of a very low dissociation constant. Promotes tolerance to low potassium K(+) conditions. The chain is Anaerobic nitrite reductase NSHB2 from Oryza sativa subsp. indica (Rice).